Here is a 411-residue protein sequence, read N- to C-terminus: MSLETFRESKAYKWTSKVISFLIGQWFFIFLGVFIALAHSYPEFAKQGGTIRAEYSIGYGAVAVIFLISGLSMSTKQLLVNVANWRAHFTVLSMSFLVTSAIIYGIASGIKASHNGQIDDWLLIGLIVTHACPTTVSSNVVMTKQAHGNDILTLCEVFIGNVLGAFITPALLQMYMRGTWEIGNPSHQTQGDSTVQELYAHTMKQLGLSVFVPLFVGQVVQNIFPKQTKWCLTTFKLNKVGSFMLLLIMFQSFSTAFAQHAFTSVSHASIIFLVFFNIGIYLFFTVLTFFYSRPFWILRVFKEEPNESSSKLYRYSYAFFRPFYYNRKDTVAVMLCGPAKTAALGVSLVSSQYGSHNPKLGIILVPLVLYQAEQVMTANVLVSFMRKWIHAEDKVPEDEETSVGSDNDPKK.

The Cytoplasmic segment spans residues 1-17; that stretch reads MSLETFRESKAYKWTSK. A helical membrane pass occupies residues 18-38; the sequence is VISFLIGQWFFIFLGVFIALA. Residues 39–52 lie on the Extracellular side of the membrane; sequence HSYPEFAKQGGTIR. The helical transmembrane segment at 53-73 threads the bilayer; sequence AEYSIGYGAVAVIFLISGLSM. At 74 to 89 the chain is on the cytoplasmic side; that stretch reads STKQLLVNVANWRAHF. The helical transmembrane segment at 90–110 threads the bilayer; the sequence is TVLSMSFLVTSAIIYGIASGI. The Extracellular portion of the chain corresponds to 111–120; sequence KASHNGQIDD. Residues 121–141 form a helical membrane-spanning segment; that stretch reads WLLIGLIVTHACPTTVSSNVV. At 142-150 the chain is on the cytoplasmic side; that stretch reads MTKQAHGND. The chain crosses the membrane as a helical span at residues 151 to 171; sequence ILTLCEVFIGNVLGAFITPAL. Over 172–204 the chain is Extracellular; sequence LQMYMRGTWEIGNPSHQTQGDSTVQELYAHTMK. Residues 205-225 traverse the membrane as a helical segment; that stretch reads QLGLSVFVPLFVGQVVQNIFP. Residues 226–242 lie on the Cytoplasmic side of the membrane; sequence KQTKWCLTTFKLNKVGS. A helical transmembrane segment spans residues 243–263; it reads FMLLLIMFQSFSTAFAQHAFT. Residues 264 to 269 are Extracellular-facing; sequence SVSHAS. A helical transmembrane segment spans residues 270–290; sequence IIFLVFFNIGIYLFFTVLTFF. Topologically, residues 291–329 are cytoplasmic; sequence YSRPFWILRVFKEEPNESSSKLYRYSYAFFRPFYYNRKD. Residues 330 to 350 form a helical membrane-spanning segment; the sequence is TVAVMLCGPAKTAALGVSLVS. Topologically, residues 351 to 361 are extracellular; that stretch reads SQYGSHNPKLG. The chain crosses the membrane as a helical span at residues 362-382; that stretch reads IILVPLVLYQAEQVMTANVLV. Topologically, residues 383 to 411 are cytoplasmic; that stretch reads SFMRKWIHAEDKVPEDEETSVGSDNDPKK.

It belongs to the bile acid:sodium symporter (BASS) (TC 2.A.28) family.

The protein resides in the cell membrane. Its subcellular location is the bud neck. In terms of biological role, solute carrier protein that negatively regulates the cytosolic homeostasis in response to high levels of extracellular calcium. In Candida albicans (strain SC5314 / ATCC MYA-2876) (Yeast), this protein is Solute carrier RCH1.